A 1064-amino-acid polypeptide reads, in one-letter code: Alpha-aminoadipic semialdehyde synthase (1064 aa).

Residues 24-445 are lysine-ketoglutarate reductase; sequence VNKWERRTPL…RACISYRGEL (422 aa). Thr-238 is subject to Phosphothreonine. At Ser-458 the chain carries Phosphoserine. The saccharopine dehydrogenase stretch occupies residues 583 to 1064; it reads MTKKSGVLIL…YGIKLMEKAE (482 aa). L-saccharopine is bound by residues 703–704, Asp-730, Arg-830, and 852–854; these read SY and TLR. 729–731 lines the NADP(+) pocket; sequence LDP.

In the N-terminal section; belongs to the AlaDH/PNT family. It in the C-terminal section; belongs to the saccharopine dehydrogenase family. Homodimer. In terms of processing, phosphorylation of Ser-458 seems important for the LKR activity. In terms of tissue distribution, ubiquitous, with higher levels in flowers. Isoform Long is mostly present in young leaves, cotyledons, root tips and mature root parts. Whereas isoform Short is mostly expressed in cotyledons and at low levels in all root parts.

The protein localises to the cytoplasm. The enzyme catalyses L-saccharopine + NADP(+) + H2O = L-lysine + 2-oxoglutarate + NADPH + H(+). It carries out the reaction L-saccharopine + NAD(+) + H2O = (S)-2-amino-6-oxohexanoate + L-glutamate + NADH + H(+). It functions in the pathway amino-acid degradation; L-lysine degradation via saccharopine pathway; glutaryl-CoA from L-lysine: step 1/6. Its pathway is amino-acid degradation; L-lysine degradation via saccharopine pathway; glutaryl-CoA from L-lysine: step 2/6. Its activity is regulated as follows. The LKR activity is stimulated by NaCl. Its function is as follows. Bifunctional enzyme that catalyzes the first two steps in lysine degradation. The N-terminal and the C-terminal contain lysine-oxoglutarate reductase and saccharopine dehydrogenase activity, respectively. Negatively regulates free Lys accumulation in seeds. This is Alpha-aminoadipic semialdehyde synthase (LKR/SDH) from Arabidopsis thaliana (Mouse-ear cress).